A 133-amino-acid chain; its full sequence is Small ribosomal subunit protein bS6 (133 aa).

The segment covering 106–125 (REERVERAPRAPRPEVKAEP) has biased composition (basic and acidic residues). The interval 106–133 (REERVERAPRAPRPEVKAEPEAEATAEA) is disordered.

It belongs to the bacterial ribosomal protein bS6 family.

Functionally, binds together with bS18 to 16S ribosomal RNA. The polypeptide is Small ribosomal subunit protein bS6 (Psychromonas ingrahamii (strain DSM 17664 / CCUG 51855 / 37)).